Here is a 306-residue protein sequence, read N- to C-terminus: RNA pseudouridylate synthase domain-containing protein 1 (306 aa).

N-acetylmethionine is present on Met-1. Asp-67 is an active-site residue. The interval 255-290 is disordered; that stretch reads RTDPDPDPMSGGPRPCSPSTPQPRPGRPPPETEAQR. Over residues 269–285 the composition is skewed to pro residues; sequence PCSPSTPQPRPGRPPPE.

It belongs to the pseudouridine synthase RluA family.

This chain is RNA pseudouridylate synthase domain-containing protein 1 (Rpusd1), found in Mus musculus (Mouse).